Consider the following 192-residue polypeptide: Peptidyl-tRNA hydrolase (192 aa).

Tyr18 provides a ligand contact to tRNA. His23 functions as the Proton acceptor in the catalytic mechanism. Residues Phe69, Asn71, and Asn117 each contribute to the tRNA site.

The protein belongs to the PTH family. As to quaternary structure, monomer.

The protein resides in the cytoplasm. It catalyses the reaction an N-acyl-L-alpha-aminoacyl-tRNA + H2O = an N-acyl-L-amino acid + a tRNA + H(+). In terms of biological role, hydrolyzes ribosome-free peptidyl-tRNAs (with 1 or more amino acids incorporated), which drop off the ribosome during protein synthesis, or as a result of ribosome stalling. Functionally, catalyzes the release of premature peptidyl moieties from peptidyl-tRNA molecules trapped in stalled 50S ribosomal subunits, and thus maintains levels of free tRNAs and 50S ribosomes. This chain is Peptidyl-tRNA hydrolase, found in Neisseria gonorrhoeae (strain ATCC 700825 / FA 1090).